A 644-amino-acid chain; its full sequence is MAGQLRLTSGKDEDHFQHQGAVELLAFNFLLILTILTIWLFKNHRFRFLHETGGAMVYGLIMGLILRYATAPTDIDSGTVYNCGKLLFSPSTLLVNITDQVYEYKYQREINQHNISPHQGNAILEKMTFDPEIFFNVLLPPIIFHAGYSLKKRHFFQNLGSILTYAFLGTAISCVVIGLIMYGFVKAMVHAGQLKSGDFHFTDCLFFGSLMSATDPVTVLAIFHELHVDPDLYTLLFGESVLNDAVAIVLTYSISIYSPKENPNAFDTAAFFQSVGNFLGIFAGSFAMGSAYAVVTALLTKFTKLREFPMLETGLFFLLSWSAFLSAEAAGLTGIVAVLFCGVTQAHYTYNNLSSDSKLRTKQLFEFMNFLAENVIFCYMGLALFTFQNHIFNALFILGAFLAIFVARACNIYPLSFLLNLGRKQKIPWNFQHMMMFSGLRGAIAFALAIRNTESQPKQMMFTTTLLLVFFTVWVFGGGTTPMLTWLQIRVGVDLDESLKEEPSSQQEANKVDKDMTKTESAQLFRMWYGFDHKYLKPILTHSGPPLTTTLPAWCGPVSRLLTSPQAYGEQLKEDDVECIVNQDELAMNYQEQSPTSSSPATKLALDQKSSGLTLGKENIYEGDLGLGGYELKLEQTRGQPQMD.

Residues 1 to 20 lie on the Lumenal side of the membrane; the sequence is MAGQLRLTSGKDEDHFQHQG. The chain crosses the membrane as a helical span at residues 21-41; that stretch reads AVELLAFNFLLILTILTIWLF. Residues 42-45 lie on the Cytoplasmic side of the membrane; that stretch reads KNHR. The helical transmembrane segment at 46-66 threads the bilayer; that stretch reads FRFLHETGGAMVYGLIMGLIL. Over 67–126 the chain is Lumenal; it reads RYATAPTDIDSGTVYNCGKLLFSPSTLLVNITDQVYEYKYQREINQHNISPHQGNAILEK. The helical transmembrane segment at 127 to 147 threads the bilayer; that stretch reads MTFDPEIFFNVLLPPIIFHAG. The Cytoplasmic segment spans residues 148–164; sequence YSLKKRHFFQNLGSILT. A helical membrane pass occupies residues 165–185; that stretch reads YAFLGTAISCVVIGLIMYGFV. Residues 186–203 are Lumenal-facing; that stretch reads KAMVHAGQLKSGDFHFTD. Residues 204-224 form a helical membrane-spanning segment; that stretch reads CLFFGSLMSATDPVTVLAIFH. Residues 225 to 235 are Cytoplasmic-facing; it reads ELHVDPDLYTL. Residues 236–256 form a helical membrane-spanning segment; sequence LFGESVLNDAVAIVLTYSISI. Residues 257–277 are Lumenal-facing; the sequence is YSPKENPNAFDTAAFFQSVGN. The helical transmembrane segment at 278-298 threads the bilayer; the sequence is FLGIFAGSFAMGSAYAVVTAL. At 299 to 309 the chain is on the cytoplasmic side; it reads LTKFTKLREFP. A helical membrane pass occupies residues 310–327; it reads MLETGLFFLLSWSAFLSA. The Lumenal segment spans residues 328–333; it reads EAAGLT. A helical membrane pass occupies residues 334–350; the sequence is GIVAVLFCGVTQAHYTY. Residues 351–364 lie on the Cytoplasmic side of the membrane; that stretch reads NNLSSDSKLRTKQL. Residues 365 to 385 form a helical membrane-spanning segment; that stretch reads FEFMNFLAENVIFCYMGLALF. Thr-386 is a topological domain (lumenal). Residues 387 to 407 traverse the membrane as a helical segment; that stretch reads FQNHIFNALFILGAFLAIFVA. The Cytoplasmic portion of the chain corresponds to 408–429; that stretch reads RACNIYPLSFLLNLGRKQKIPW. The chain crosses the membrane as a helical span at residues 430–450; the sequence is NFQHMMMFSGLRGAIAFALAI. The Lumenal portion of the chain corresponds to 451-465; that stretch reads RNTESQPKQMMFTTT. A helical membrane pass occupies residues 466–486; it reads LLLVFFTVWVFGGGTTPMLTW. Topologically, residues 487 to 644 are cytoplasmic; that stretch reads LQIRVGVDLD…EQTRGQPQMD (158 aa).

The protein belongs to the monovalent cation:proton antiporter 1 (CPA1) transporter (TC 2.A.36) family. In terms of assembly, homodimer; phosphatidylinositol-4,5-bisphosphate (PIP2) and phosphatidylinositol 3,4,5-trisphosphate (PIP3) could be involved in the dimer stabilization. Interacts (via the C-terminus) with RACK1. Interacts with CHP1. As to expression, expressed in hair bundles and in vestibular hair bundles. Expressed in brain.

It is found in the late endosome membrane. The protein resides in the early endosome membrane. Its subcellular location is the recycling endosome membrane. The protein localises to the cell membrane. It localises to the cytoplasmic vesicle. It is found in the phagosome membrane. The catalysed reaction is Na(+)(in) + H(+)(out) = Na(+)(out) + H(+)(in). It catalyses the reaction K(+)(in) + H(+)(out) = K(+)(out) + H(+)(in). Endosomal Na(+), K(+)/H(+) antiporter. Mediates the electroneutral exchange of endosomal luminal H(+) for a cytosolic Na(+) or K(+). By facilitating proton efflux, SLC9A9 counteracts the acidity generated by vacuolar (V)-ATPase, thereby limiting luminal acidification. Regulates organellar pH and consequently, endosome maturation and endocytic trafficking of plasma membrane receptors and neurotransporters. Promotes the recycling of transferrin receptors back to the cell surface to facilitate additional iron uptake in the brain. Regulates synaptic transmission by regulating the luminal pH of axonal endosomes. Regulates phagosome lumenal pH, thus affecting phagosome maturation, and consequently, microbicidal activity in macrophages. Can also be active at the cell surface of specialized cells, e.g., in the inner ear hair bundles uses the high K(+) of the endolymph to regulate intracelular pH. The chain is Sodium/hydrogen exchanger 9 (Slc9a9) from Rattus norvegicus (Rat).